The following is a 398-amino-acid chain: Phosphoglycerate kinase (398 aa).

Substrate is bound by residues 21-23 (DFN), Arg36, 59-62 (HLGR), Arg119, and Arg157. ATP contacts are provided by residues Lys208, Gly296, Glu327, and 354–357 (GGDS).

It belongs to the phosphoglycerate kinase family. Monomer.

Its subcellular location is the cytoplasm. The catalysed reaction is (2R)-3-phosphoglycerate + ATP = (2R)-3-phospho-glyceroyl phosphate + ADP. The protein operates within carbohydrate degradation; glycolysis; pyruvate from D-glyceraldehyde 3-phosphate: step 2/5. This Streptococcus pneumoniae serotype 4 (strain ATCC BAA-334 / TIGR4) protein is Phosphoglycerate kinase.